The sequence spans 159 residues: Trafficking protein particle complex subunit 6A (159 aa).

At S33 the chain carries Phosphoserine.

It belongs to the TRAPP small subunits family. BET3 subfamily. Part of the multisubunit transport protein particle (TRAPP) complex. Heterodimer with TRAPPC3. The heterodimer TRAPPC3-TRAPPC6A interacts with TRAPPC2L. Interacts with TRAPPC2L.

The protein localises to the golgi apparatus. The protein resides in the cis-Golgi network. It is found in the endoplasmic reticulum. In terms of biological role, may play a role in vesicular transport during the biogenesis of melanosomes. The protein is Trafficking protein particle complex subunit 6A of Bos taurus (Bovine).